The chain runs to 345 residues: Anthranilate phosphoribosyltransferase (345 aa).

5-phospho-alpha-D-ribose 1-diphosphate is bound by residues glycine 88, 91 to 92 (GD), threonine 96, 98 to 101 (NIST), 116 to 124 (KHGNRSASG), and serine 128. Glycine 88 is an anthranilate binding site. Serine 100 is a Mg(2+) binding site. An anthranilate-binding site is contributed by asparagine 119. Arginine 174 lines the anthranilate pocket. Residues aspartate 233 and glutamate 234 each contribute to the Mg(2+) site.

Belongs to the anthranilate phosphoribosyltransferase family. In terms of assembly, homodimer. It depends on Mg(2+) as a cofactor.

It carries out the reaction N-(5-phospho-beta-D-ribosyl)anthranilate + diphosphate = 5-phospho-alpha-D-ribose 1-diphosphate + anthranilate. The protein operates within amino-acid biosynthesis; L-tryptophan biosynthesis; L-tryptophan from chorismate: step 2/5. Catalyzes the transfer of the phosphoribosyl group of 5-phosphorylribose-1-pyrophosphate (PRPP) to anthranilate to yield N-(5'-phosphoribosyl)-anthranilate (PRA). This is Anthranilate phosphoribosyltransferase from Prochlorococcus marinus (strain NATL2A).